Consider the following 184-residue polypeptide: Cell division protein ZapC (184 aa).

Belongs to the ZapC family. In terms of assembly, interacts directly with FtsZ.

It is found in the cytoplasm. Functionally, contributes to the efficiency of the cell division process by stabilizing the polymeric form of the cell division protein FtsZ. Acts by promoting interactions between FtsZ protofilaments and suppressing the GTPase activity of FtsZ. This Idiomarina loihiensis (strain ATCC BAA-735 / DSM 15497 / L2-TR) protein is Cell division protein ZapC.